A 257-amino-acid chain; its full sequence is Type III pantothenate kinase (257 aa).

Residue 6–13 (DCGNTNTV) coordinates ATP. 107-110 (GPDR) serves as a coordination point for substrate. Residue aspartate 109 is the Proton acceptor of the active site. Aspartate 129 contacts K(+). Threonine 132 contacts ATP. Position 184 (threonine 184) interacts with substrate.

This sequence belongs to the type III pantothenate kinase family. In terms of assembly, homodimer. The cofactor is NH4(+). Requires K(+) as cofactor.

The protein localises to the cytoplasm. The enzyme catalyses (R)-pantothenate + ATP = (R)-4'-phosphopantothenate + ADP + H(+). It functions in the pathway cofactor biosynthesis; coenzyme A biosynthesis; CoA from (R)-pantothenate: step 1/5. Its function is as follows. Catalyzes the phosphorylation of pantothenate (Pan), the first step in CoA biosynthesis. In Cereibacter sphaeroides (strain ATCC 17025 / ATH 2.4.3) (Rhodobacter sphaeroides), this protein is Type III pantothenate kinase.